The following is a 197-amino-acid chain: Protein LURP-one-related 9 (197 aa).

Belongs to the LOR family.

Functionally, might be related to the phospholipid scramblase and tubby-like superfamily of membrane tethered transcription factors. The protein is Protein LURP-one-related 9 of Arabidopsis thaliana (Mouse-ear cress).